Reading from the N-terminus, the 497-residue chain is Tryptophan decarboxylase 2 (497 aa).

Residues Ala162, Ser163, Thr257, and Asn311 each coordinate pyridoxal 5'-phosphate. Residue Lys314 is modified to N6-(pyridoxal phosphate)lysine.

The protein belongs to the group II decarboxylase family. It depends on pyridoxal 5'-phosphate as a cofactor.

The catalysed reaction is L-tryptophan + H(+) = tryptamine + CO2. Involved in serotonin biosynthesis. Catalyzes the decarboxylation of L-tryptophan to tryptamine, which is converted to serotonin by tryptamine 5-hydroxylase. May play a minor role in serotonin biosynthetis during senescence. Accumulation of serotonin attenuates leaf senescence. The sequence is that of Tryptophan decarboxylase 2 from Oryza sativa subsp. japonica (Rice).